The sequence spans 115 residues: Large ribosomal subunit protein P2 (115 aa).

N-acetylmethionine is present on M1. Residues S17 and S19 each carry the phosphoserine modification. Residue K21 is modified to N6-acetyllysine; alternate. K21 is modified (N6-succinyllysine; alternate). The segment covering 76-90 (APGSAAPAAGSAPAA) has biased composition (low complexity). Positions 76-115 (APGSAAPAAGSAPAAAEERKEEKKEESEESDDDMGFGLFD) are disordered. Phosphoserine occurs at positions 79 and 86. A compositionally biased stretch (basic and acidic residues) spans 91–101 (AEERKEEKKEE). S102 and S105 each carry phosphoserine.

The protein belongs to the eukaryotic ribosomal protein P1/P2 family. As to quaternary structure, heterodimer with RPLP1 at the lateral ribosomal stalk of the large ribosomal subunit.

In terms of biological role, plays an important role in the elongation step of protein synthesis. The polypeptide is Large ribosomal subunit protein P2 (RPLP2) (Equus caballus (Horse)).